Here is a 394-residue protein sequence, read N- to C-terminus: Elongation factor Tu (394 aa).

The tr-type G domain occupies 10–204; that stretch reads KPHVNIGTIG…AVDSYIPQPV (195 aa). The G1 stretch occupies residues 19–26; that stretch reads GHVDHGKT. Residue 19–26 coordinates GTP; sequence GHVDHGKT. Position 26 (T26) interacts with Mg(2+). The segment at 60-64 is G2; it reads GITIS. Residues 81-84 are G3; sequence DCPG. GTP is bound by residues 81-85 and 136-139; these read DCPGH and NKVD. The segment at 136-139 is G4; the sequence is NKVD. Positions 174–176 are G5; the sequence is SAL.

Belongs to the TRAFAC class translation factor GTPase superfamily. Classic translation factor GTPase family. EF-Tu/EF-1A subfamily. In terms of assembly, monomer.

The protein localises to the cytoplasm. It carries out the reaction GTP + H2O = GDP + phosphate + H(+). Functionally, GTP hydrolase that promotes the GTP-dependent binding of aminoacyl-tRNA to the A-site of ribosomes during protein biosynthesis. This is Elongation factor Tu from Rickettsia felis (strain ATCC VR-1525 / URRWXCal2) (Rickettsia azadi).